Reading from the N-terminus, the 406-residue chain is uncharacterized protein (406 aa).

A run of 5 helical transmembrane segments spans residues 7–27 (LCTNPLIILIGTYMSIKYYLF), 31–51 (YFNIQFGLYVTFIISLLYGSV), 65–85 (LIFILHVLFVLICFSIKSEII), 92–112 (IFYFGFVKTIIISVVIGSFIL), and 191–211 (ISLIKMYLYSVIVPYAISSFF). The segment at 259–331 (TLNVPISTNN…TGTNNNVVDN (73 aa)) is disordered. Residues 262 to 291 (VPISTNNTDNLNSVKTNQQFNTPVAKSNTK) are compositionally biased toward polar residues. Residues 292 to 303 (SNRRKKTGKKIR) are compositionally biased toward basic residues. Positions 306 to 318 (NQTTSSNSSNNQS) are enriched in low complexity. The segment covering 319–330 (PESTGTNNNVVD) has biased composition (polar residues).

It localises to the membrane. This is an uncharacterized protein from Acanthamoeba polyphaga (Amoeba).